The chain runs to 215 residues: Probable phosphoglycerate mutase GpmB (215 aa).

Residues 8 to 15 (RHGETLWN), 21 to 22 (QG), Arg-58, Arg-60, 82 to 85 (ELNM), and 151 to 152 (GM) each bind substrate. His-9 functions as the Tele-phosphohistidine intermediate in the catalytic mechanism. Glu-82 (proton donor/acceptor) is an active-site residue.

This sequence belongs to the phosphoglycerate mutase family. GpmB subfamily.

It catalyses the reaction (2R)-2-phosphoglycerate = (2R)-3-phosphoglycerate. The protein operates within carbohydrate degradation; glycolysis; pyruvate from D-glyceraldehyde 3-phosphate: step 3/5. In Erwinia tasmaniensis (strain DSM 17950 / CFBP 7177 / CIP 109463 / NCPPB 4357 / Et1/99), this protein is Probable phosphoglycerate mutase GpmB.